Consider the following 257-residue polypeptide: Transcription factor GHD7 (257 aa).

The residue at position 68 (Ser68) is a Phosphoserine; by CK1. The region spanning 190–232 (REAKLMRYKEKRKKRCYEKQIRYASRKAYAEMRPRVRGRFAKE) is the CCT domain. Residues 198-204 (KEKRKKR) carry the Nuclear localization signal motif. The segment at 226 to 245 (RGRFAKEPDQEAVAPPSTYV) is disordered.

Interacts with HD16/EL1. Phosphorylated at Ser-68 by HD16/EL1, a casein kinase 1. As to expression, expressed in the apical meristem, developing leaves, leaf sheaths of young seedling, root meristem, epidermal layer of developing stems and branch-primordia of developing panicles.

It is found in the nucleus. In terms of biological role, probable transcription factor involved in the regulation of flowering time under long day (LD) conditions. Plays a major role as repressor of flowering. Controls flowering time by negatively regulating the expression of EHD1 and HD3A. This Oryza sativa subsp. japonica (Rice) protein is Transcription factor GHD7.